The chain runs to 156 residues: Small ribosomal subunit protein uS7 (156 aa).

This sequence belongs to the universal ribosomal protein uS7 family. As to quaternary structure, part of the 30S ribosomal subunit. Contacts proteins S9 and S11.

In terms of biological role, one of the primary rRNA binding proteins, it binds directly to 16S rRNA where it nucleates assembly of the head domain of the 30S subunit. Is located at the subunit interface close to the decoding center, probably blocks exit of the E-site tRNA. This is Small ribosomal subunit protein uS7 from Mycobacterium leprae (strain Br4923).